Consider the following 279-residue polypeptide: Pleckstrin homology domain-containing family F member 1 (279 aa).

The PH domain maps to 35–131 (VLLGEGVLTK…WISHIEECVR (97 aa)). Residues 152–212 (DKATDICMRC…VCSLCYRELA (61 aa)) form an FYVE-type zinc finger. Positions 158, 161, 175, 178, 183, 186, 204, and 207 each coordinate Zn(2+). The disordered stretch occupies residues 219 to 264 (EAKERFRGSPGQLTHLGSTMCGASSGDDDDSDEDREGSGDGDWPTQ). The span at 244–253 (GDDDDSDEDR) shows a compositional bias: acidic residues.

The protein resides in the nucleus. Its subcellular location is the cytoplasm. It localises to the perinuclear region. The protein localises to the lysosome. In terms of biological role, may induce apoptosis through the lysosomal-mitochondrial pathway. Translocates to the lysosome initiating the permeabilization of lysosomal membrane (LMP) and resulting in the release of CTSD and CTSL to the cytoplasm. Triggers the caspase-independent apoptosis by altering mitochondrial membrane permeabilization (MMP) resulting in the release of PDCD8. In Rattus norvegicus (Rat), this protein is Pleckstrin homology domain-containing family F member 1 (Plekhf1).